A 99-amino-acid polypeptide reads, in one-letter code: uncharacterized protein (99 aa).

One can recognise a TM2 domain in the interval 32–79 (KKSVGIAVLLSFIIPGAGQMYLGRVGKGIILLLTCWLIIPWIYSIYDA). The next 2 membrane-spanning stretches (helical) occupy residues 34–54 (SVGIAVLLSFIIPGAGQMYLG) and 56–76 (VGKGIILLLTCWLIIPWIYSI).

The protein resides in the cell membrane. This is an uncharacterized protein from Methanocaldococcus jannaschii (strain ATCC 43067 / DSM 2661 / JAL-1 / JCM 10045 / NBRC 100440) (Methanococcus jannaschii).